A 121-amino-acid chain; its full sequence is Two-component response regulator ORR12 (121 aa).

Positions 5–121 (HVLVVDDTLV…VDLPRILNYI (117 aa)) constitute a Response regulatory domain. At Asp-55 the chain carries 4-aspartylphosphate.

The protein belongs to the ARR family. Type-A subfamily. Post-translationally, two-component system major event consists of a His-to-Asp phosphorelay between a sensor histidine kinase (HK) and a response regulator (RR). In plants, the His-to-Asp phosphorelay involves an additional intermediate named Histidine-containing phosphotransfer protein (HPt). This multistep phosphorelay consists of a His-Asp-His-Asp sequential transfer of a phosphate group between first a His and an Asp of the HK protein, followed by the transfer to a conserved His of the HPt protein and finally the transfer to an Asp in the receiver domain of the RR protein. Expressed in flowers and panicles.

In terms of biological role, functions as a response regulator involved in His-to-Asp phosphorelay signal transduction system. Phosphorylation of the Asp residue in the receiver domain activates the ability of the protein to promote the transcription of target genes. Type-A response regulators seem to act as negative regulators of the cytokinin signaling. The protein is Two-component response regulator ORR12 of Oryza sativa subsp. japonica (Rice).